We begin with the raw amino-acid sequence, 368 residues long: UDP-N-acetylglucosamine--N-acetylmuramyl-(pentapeptide) pyrophosphoryl-undecaprenol N-acetylglucosamine transferase (368 aa).

UDP-N-acetyl-alpha-D-glucosamine contacts are provided by residues 10 to 12 (TGG), asparagine 128, arginine 170, serine 199, isoleucine 250, and glutamine 295.

It belongs to the glycosyltransferase 28 family. MurG subfamily.

It localises to the cell inner membrane. The catalysed reaction is di-trans,octa-cis-undecaprenyl diphospho-N-acetyl-alpha-D-muramoyl-L-alanyl-D-glutamyl-meso-2,6-diaminopimeloyl-D-alanyl-D-alanine + UDP-N-acetyl-alpha-D-glucosamine = di-trans,octa-cis-undecaprenyl diphospho-[N-acetyl-alpha-D-glucosaminyl-(1-&gt;4)]-N-acetyl-alpha-D-muramoyl-L-alanyl-D-glutamyl-meso-2,6-diaminopimeloyl-D-alanyl-D-alanine + UDP + H(+). The protein operates within cell wall biogenesis; peptidoglycan biosynthesis. In terms of biological role, cell wall formation. Catalyzes the transfer of a GlcNAc subunit on undecaprenyl-pyrophosphoryl-MurNAc-pentapeptide (lipid intermediate I) to form undecaprenyl-pyrophosphoryl-MurNAc-(pentapeptide)GlcNAc (lipid intermediate II). In Chlorobium phaeovibrioides (strain DSM 265 / 1930) (Prosthecochloris vibrioformis (strain DSM 265)), this protein is UDP-N-acetylglucosamine--N-acetylmuramyl-(pentapeptide) pyrophosphoryl-undecaprenol N-acetylglucosamine transferase.